Reading from the N-terminus, the 153-residue chain is SsrA-binding protein (153 aa).

The segment covering 132–142 has biased composition (basic and acidic residues); sequence ALKRKEAEREA. Residues 132–153 are disordered; it reads ALKRKEAEREAQSAMKRYAKGY.

Belongs to the SmpB family.

It is found in the cytoplasm. In terms of biological role, required for rescue of stalled ribosomes mediated by trans-translation. Binds to transfer-messenger RNA (tmRNA), required for stable association of tmRNA with ribosomes. tmRNA and SmpB together mimic tRNA shape, replacing the anticodon stem-loop with SmpB. tmRNA is encoded by the ssrA gene; the 2 termini fold to resemble tRNA(Ala) and it encodes a 'tag peptide', a short internal open reading frame. During trans-translation Ala-aminoacylated tmRNA acts like a tRNA, entering the A-site of stalled ribosomes, displacing the stalled mRNA. The ribosome then switches to translate the ORF on the tmRNA; the nascent peptide is terminated with the 'tag peptide' encoded by the tmRNA and targeted for degradation. The ribosome is freed to recommence translation, which seems to be the essential function of trans-translation. This chain is SsrA-binding protein, found in Campylobacter hominis (strain ATCC BAA-381 / DSM 21671 / CCUG 45161 / LMG 19568 / NCTC 13146 / CH001A).